The sequence spans 784 residues: Toll-like receptor 2 (784 aa).

The N-terminal stretch at 1-20 (MPRALWTAWVWAXIILSTEG) is a signal peptide. The Extracellular portion of the chain corresponds to 21–587 (ASDQASSLSC…ARLSLSECHR (567 aa)). A disulfide bridge links Cys30 with Cys36. 19 LRR repeats span residues 54-77 (VKSL…RCVN), 78-101 (LKTL…HLRN), 102-125 (LEYL…SLYV), 126-150 (LKFL…HLPN), 151-175 (LXTL…GLTF), 176-199 (LEEL…SIQN), 200-223 (ISHL…IVSS), 224-250 (LDCL…MSTS), 251-278 (VKKL…YVSG), 279-308 (ILEV…HLGN), 309-337 (VETL…LTGK), 338-361 (VKRV…HLKS), 362-388 (LEYL…AWPF), 389-414 (LQTL…TLEN), 415-437 (LNSL…WPGK), 438-457 (MKQL…CLPQ), 458-478 (TLEI…ILPQ), 479-500 (LKEL…FLPV), and 501-524 (LSVM…SFQQ). Residue Asn114 is glycosylated (N-linked (GlcNAc...) asparagine). An N-linked (GlcNAc...) asparagine glycan is attached at Asn199. A disulfide bridge connects residues Cys353 and Cys382. A disulfide bridge connects residues Cys432 and Cys454. Asn442 is a glycosylation site (N-linked (GlcNAc...) asparagine). Positions 525–579 (LKTLEAGGNNFICSCDFLSFTQGQQALGRVLVDWPDDYRCDSPSHVRGQRVQDAR) constitute an LRRCT domain. Residues 588-608 (AAVVSAACCALFLVLLLTGVL) form a helical membrane-spanning segment. Over 609–784 (CHRFHGLWYM…WLNLRAAIRS (176 aa)) the chain is Cytoplasmic. In terms of domain architecture, TIR spans 639 to 782 (ICYDAFVSYS…GFWLNLRAAI (144 aa)). Lys754 is covalently cross-linked (Glycyl lysine isopeptide (Lys-Gly) (interchain with G-Cter in ubiquitin)). Residues 761–778 (YLEWPVDETQQEGFWLNL) carry the ATG16L1-binding motif motif.

It belongs to the Toll-like receptor family. As to quaternary structure, interacts with LY96, TLR1 and TLR6 (via extracellular domain). TLR2 seems to exist in heterodimers with either TLR1 or TLR6 before stimulation by the ligand. The heterodimers form bigger oligomers in response to their corresponding ligands as well as further heterotypic associations with other receptors such as CD14 and/or CD36. Binds MYD88 (via TIR domain). Interacts with TICAM1. Interacts with CNPY3. Interacts with ATG16L1. Interacts with PPP1R11. Interacts with TICAM2. Interacts with TIRAP. In terms of processing, ubiquitinated at Lys-754 by PPP1R11, leading to its degradation. Deubiquitinated by USP2. Glycosylation of Asn-442 is critical for secretion of the N-terminal ectodomain of TLR2.

It localises to the membrane. Its subcellular location is the cytoplasmic vesicle. It is found in the phagosome membrane. The protein resides in the membrane raft. In terms of biological role, cooperates with LY96 to mediate the innate immune response to bacterial lipoproteins and other microbial cell wall components. Cooperates with TLR1 or TLR6 to mediate the innate immune response to bacterial lipoproteins or lipopeptides. Acts via MYD88 and TRAF6, leading to NF-kappa-B activation, cytokine secretion and the inflammatory response. May also promote apoptosis in response to lipoproteins. Forms activation clusters composed of several receptors depending on the ligand, these clusters trigger signaling from the cell surface and subsequently are targeted to the Golgi in a lipid-raft dependent pathway. Forms the cluster TLR2:TLR6:CD14:CD36 in response to diacylated lipopeptides and TLR2:TLR1:CD14 in response to triacylated lipopeptides. This chain is Toll-like receptor 2 (TLR2), found in Bison bison (American bison).